A 35-amino-acid polypeptide reads, in one-letter code: Tamulustoxin-2 (35 aa).

3 disulfide bridges follow: Cys2–Cys22, Cys7–Cys31, and Cys11–Cys33.

The protein belongs to the short scorpion toxin superfamily. Potassium channel inhibitor family. As to expression, expressed by the venom gland.

The protein resides in the secreted. Its function is as follows. Blocks Kv1.6/KCNA6 potassium channels. This is Tamulustoxin-2 from Hottentotta tamulus (Eastern Indian scorpion).